Reading from the N-terminus, the 276-residue chain is Hydroxyethylthiazole kinase (276 aa).

Positions 126 and 172 each coordinate ATP. A substrate-binding site is contributed by G199.

It belongs to the Thz kinase family. Requires Mg(2+) as cofactor.

It carries out the reaction 5-(2-hydroxyethyl)-4-methylthiazole + ATP = 4-methyl-5-(2-phosphooxyethyl)-thiazole + ADP + H(+). It functions in the pathway cofactor biosynthesis; thiamine diphosphate biosynthesis; 4-methyl-5-(2-phosphoethyl)-thiazole from 5-(2-hydroxyethyl)-4-methylthiazole: step 1/1. Functionally, catalyzes the phosphorylation of the hydroxyl group of 4-methyl-5-beta-hydroxyethylthiazole (THZ). In Burkholderia pseudomallei (strain 1106a), this protein is Hydroxyethylthiazole kinase.